We begin with the raw amino-acid sequence, 375 residues long: MKEEIQNETAQTQLQREGRMFSFLFPVIEVIKVVMASVASVVFLGFGGVTLACSAVALAVSTPLFIIFSPILVPATIATTLLATGLGAGTTLGVTGMGLLMRLIKHPGKEGAASAPAAQPSFLSLLEMPNFIKSKMLERLIHIPGVGKKSEGRGESKGKKGKKGKSEHGRGKHEGEGKSKGRKGHRMGVNPENNPPPAGAPPTGSPPAAPAAPEAPAAPAAPAAPAAPAAPAAPAAPEDPAAPAAPEAPATPAAPPAPAAAPAPAAPAAPPAPAAPPRPPSFLSLLEMPSFIKSKLIEALINIPGFGKKSNDRGKSKGGKKSKGKGKSNGRGKHEGEGKSKSRKSKSRGKDKEKSKGKGIFGRSSRKGSSDDESS.

A polar region spans residues 1–32 (MKEEIQNETAQTQLQREGRMFSFLFPVIEVIK). 3 consecutive transmembrane segments (helical) span residues 21 to 43 (FSFL…SVVF), 55 to 75 (AVAL…LVPA), and 81 to 101 (LLAT…GLLM). Residues 33–112 (VVMASVASVV…LIKHPGKEGA (80 aa)) form a hydrophobic region. Disordered stretches follow at residues 144–284 (PGVG…SFLS) and 303–375 (IPGF…DESS). The segment covering 148-179 (KKSEGRGESKGKKGKKGKSEHGRGKHEGEGKS) has biased composition (basic and acidic residues). Over residues 193–210 (NNPPPAGAPPTGSPPAAP) the composition is skewed to pro residues. Tandem repeats lie at residues 207-209 (PAA), 210-212 (PAA), 213-215 (PEA), 216-218 (PAA), 219-221 (PAA), 222-224 (PAA), 225-227 (PAA), 228-230 (PAA), 231-233 (PAA), 234-236 (PAA), 237-239 (PED), 240-242 (PAA), 243-245 (PAA), 246-248 (PEA), 249-251 (PAT), 252-254 (PAA), 255-257 (PPA), 258-260 (PAA), 261-263 (APA), 264-266 (PAA), 267-269 (PAA), 270-272 (PPA), and 273-275 (PAA). The 23 X 3 AA approximate tandem repeats of P-A-A stretch occupies residues 207-275 (PAAPAAPEAP…APAAPPAPAA (69 aa)). The segment covering 211-251 (AAPEAPAAPAAPAAPAAPAAPAAPAAPEDPAAPAAPEAPAT) has biased composition (low complexity). A compositionally biased stretch (pro residues) spans 252-280 (PAAPPAPAAAPAPAAPAAPPAPAAPPRPP). A compositionally biased stretch (basic residues) spans 316–331 (SKGGKKSKGKGKSNGR).

The protein belongs to the oleosin family. In terms of tissue distribution, the full-length protein is found in the tapetal lipid bodies of immature anthers, the proteolytically cleaved C-terminal product is found on the coats of pollen grains. Not found in flowers, developing embryos or leaf tissue.

Its subcellular location is the lipid droplet. The protein resides in the membrane. Functionally, many of the major pollen coat proteins are derived from endoproteolytic cleavage of oleosin-like proteins. This is Oleosin-B6 from Brassica napus (Rape).